A 102-amino-acid chain; its full sequence is Small ribosomal subunit protein uS10 (102 aa).

It belongs to the universal ribosomal protein uS10 family. As to quaternary structure, part of the 30S ribosomal subunit.

Functionally, involved in the binding of tRNA to the ribosomes. The sequence is that of Small ribosomal subunit protein uS10 from Clostridium acetobutylicum (strain ATCC 824 / DSM 792 / JCM 1419 / IAM 19013 / LMG 5710 / NBRC 13948 / NRRL B-527 / VKM B-1787 / 2291 / W).